We begin with the raw amino-acid sequence, 367 residues long: Protein-glutamate methylesterase/protein-glutamine glutaminase 2 (367 aa).

Residues 15–132 (RALIVDDSAL…SQSMHEMAEE (118 aa)) enclose the Response regulatory domain. Position 66 is a 4-aspartylphosphate (aspartate 66). The CheB-type methylesterase domain maps to 172–367 (KTSVRNVLAI…MADEIVKIVR (196 aa)). Residues serine 184, histidine 211, and aspartate 311 contribute to the active site.

This sequence belongs to the CheB family. Phosphorylated by CheA. Phosphorylation of the N-terminal regulatory domain activates the methylesterase activity.

It localises to the cytoplasm. It catalyses the reaction [protein]-L-glutamate 5-O-methyl ester + H2O = L-glutamyl-[protein] + methanol + H(+). It carries out the reaction L-glutaminyl-[protein] + H2O = L-glutamyl-[protein] + NH4(+). Involved in chemotaxis. Part of a chemotaxis signal transduction system that modulates chemotaxis in response to various stimuli. Catalyzes the demethylation of specific methylglutamate residues introduced into the chemoreceptors (methyl-accepting chemotaxis proteins or MCP) by CheR. Also mediates the irreversible deamidation of specific glutamine residues to glutamic acid. The polypeptide is Protein-glutamate methylesterase/protein-glutamine glutaminase 2 (Methanosarcina mazei (strain ATCC BAA-159 / DSM 3647 / Goe1 / Go1 / JCM 11833 / OCM 88) (Methanosarcina frisia)).